We begin with the raw amino-acid sequence, 805 residues long: Lon protease (805 aa).

The Lon N-terminal domain occupies 13 to 205 (IPIIVEDELF…KLIDYVIEEI (193 aa)). Residue 366-373 (GPPGVGKT) participates in ATP binding. A Lon proteolytic domain is found at 603-803 (KDQIGLVNGL…DDVLKNALVA (201 aa)). Residues Ser-708 and Lys-751 contribute to the active site.

Belongs to the peptidase S16 family. As to quaternary structure, homohexamer. Organized in a ring with a central cavity.

The protein resides in the cytoplasm. The enzyme catalyses Hydrolysis of proteins in presence of ATP.. ATP-dependent serine protease that mediates the selective degradation of mutant and abnormal proteins as well as certain short-lived regulatory proteins. Required for cellular homeostasis and for survival from DNA damage and developmental changes induced by stress. Degrades polypeptides processively to yield small peptide fragments that are 5 to 10 amino acids long. Binds to DNA in a double-stranded, site-specific manner. The sequence is that of Lon protease from Campylobacter concisus (strain 13826).